We begin with the raw amino-acid sequence, 370 residues long: Psilocybin cluster transcription regulator (370 aa).

Disordered stretches follow at residues 1 to 39 and 102 to 221; these read MAPT…ADIS and YQTG…RRRR. A compositionally biased stretch (polar residues) spans 143-152; sequence IQHQDQQQSG. Low complexity predominate over residues 183–202; sequence TSTSTPSGGRRGGRSATMGS. Residues 204 to 218 show a composition bias toward basic and acidic residues; the sequence is EWSRQRKDNHKEVER. A basic motif region spans residues 208–221; that stretch reads QRKDNHKEVERRRR. The 51-residue stretch at 208–258 folds into the bHLH domain; that stretch reads QRKDNHKEVERRRRGNINEGINELGRIVPSGSGEKAKGAILSRAVQYIHHL. The tract at residues 222-258 is helix-loop-helix motif; that stretch reads GNINEGINELGRIVPSGSGEKAKGAILSRAVQYIHHL. The segment at 317-370 is disordered; sequence VSTAGAGSGAAKDESAAGTKRRSTDGADAAGTNVEGGNNDNAEGERDGKRQRTE. Residues 359–370 show a composition bias toward basic and acidic residues; the sequence is EGERDGKRQRTE.

The protein localises to the nucleus. Transcription factor that may regulate the expression of the gene cluster that mediates the biosynthesis of psilocybin, a psychotropic tryptamine-derived natural product. In Psilocybe cyanescens, this protein is Psilocybin cluster transcription regulator.